The sequence spans 879 residues: Alanine--tRNA ligase (879 aa).

H564, H568, C666, and H670 together coordinate Zn(2+).

Belongs to the class-II aminoacyl-tRNA synthetase family. The cofactor is Zn(2+).

It is found in the cytoplasm. The enzyme catalyses tRNA(Ala) + L-alanine + ATP = L-alanyl-tRNA(Ala) + AMP + diphosphate. In terms of biological role, catalyzes the attachment of alanine to tRNA(Ala) in a two-step reaction: alanine is first activated by ATP to form Ala-AMP and then transferred to the acceptor end of tRNA(Ala). Also edits incorrectly charged Ser-tRNA(Ala) and Gly-tRNA(Ala) via its editing domain. This is Alanine--tRNA ligase from Crocosphaera subtropica (strain ATCC 51142 / BH68) (Cyanothece sp. (strain ATCC 51142)).